Reading from the N-terminus, the 687-residue chain is uncharacterized protein (687 aa).

Over residues 277–295 (SVCSSQSFSSGQSDISMSS) the composition is skewed to low complexity. Disordered regions lie at residues 277–337 (SVCS…QDCD), 342–361 (DTES…SEMP), and 531–564 (HVEQ…PSLI). Residues 300–313 (NGSSVGNGSLSPMT) are compositionally biased toward polar residues.

This is an uncharacterized protein from Caenorhabditis elegans.